Consider the following 295-residue polypeptide: Putative attaching and effacing protein homolog (295 aa).

The signal sequence occupies residues 1 to 25 (MSHYKTGHKQPRFRYSVLARCVAWA).

It belongs to the intimin/invasin family.

The polypeptide is Putative attaching and effacing protein homolog (eaeH) (Escherichia coli (strain K12)).